A 5125-amino-acid polypeptide reads, in one-letter code: Usherin (5125 aa).

The signal sequence occupies residues 1-33 (MYYLALSSGFLGQAIKTSILAYLASVLLAASQG). 7 N-linked (GlcNAc...) asparagine glycosylation sites follow: Asn-120, Asn-229, Asn-257, Asn-273, Asn-414, Asn-447, and Asn-468. A Laminin N-terminal domain is found at 273-513 (NVSLTNREIL…AVDEITIIGR (241 aa)). Disulfide bonds link Cys-514/Cys-523, Cys-516/Cys-532, Cys-534/Cys-545, Cys-548/Cys-568, Cys-571/Cys-580, Cys-573/Cys-601, Cys-604/Cys-613, Cys-616/Cys-634, Cys-637/Cys-651, Cys-639/Cys-658, Cys-660/Cys-669, Cys-672/Cys-687, Cys-690/Cys-704, Cys-692/Cys-711, Cys-713/Cys-722, Cys-725/Cys-740, Cys-743/Cys-755, Cys-745/Cys-762, Cys-764/Cys-773, Cys-776/Cys-788, Cys-791/Cys-804, Cys-793/Cys-811, Cys-813/Cys-822, Cys-825/Cys-840, Cys-843/Cys-857, Cys-845/Cys-864, Cys-866/Cys-875, Cys-878/Cys-893, Cys-896/Cys-909, Cys-898/Cys-916, Cys-918/Cys-927, Cys-930/Cys-944, Cys-947/Cys-959, Cys-949/Cys-966, Cys-981/Cys-995, Cys-998/Cys-1010, Cys-1000/Cys-1017, Cys-1019/Cys-1028, and Cys-1031/Cys-1046. 10 Laminin EGF-like domains span residues 514–570 (CQCH…NCKP), 571–636 (CQCH…VCKH), 637–689 (CDCN…CCRP), 690–742 (CDCN…GCEP), 743–790 (CHCN…ACEV), 791–842 (CDCN…LCLP), 843–895 (CNCE…GCQA), 896–946 (CDCD…GCLP), 947–997 (CLCH…RCRP), and 998–1048 (CHCH…ACSK). Residue Asn-646 is glycosylated (N-linked (GlcNAc...) asparagine). Residues Asn-835 and Asn-852 are each glycosylated (N-linked (GlcNAc...) asparagine). The N-linked (GlcNAc...) asparagine glycan is linked to Asn-884. Residue Asn-940 is glycosylated (N-linked (GlcNAc...) asparagine). The N-linked (GlcNAc...) asparagine glycan is linked to Asn-1007. Fibronectin type-III domains lie at 1054-1142 (PPPR…TKPE), 1146-1240 (GHLN…APPQ), 1241-1356 (RQEP…SAPV), and 1357-1461 (FMAA…AAPA). Residues Asn-1067, Asn-1149, Asn-1170, Asn-1221, Asn-1304, and Asn-1381 are each glycosylated (N-linked (GlcNAc...) asparagine). Laminin G-like domains lie at 1510–1697 (TKGT…WEGC) and 1702–1879 (EEGV…QDGC). Disulfide bonds link Cys-1660–Cys-1697 and Cys-1850–Cys-1879. Fibronectin type-III domains are found at residues 1857–1943 (TRGA…SAPH), 1945–2042 (VPTP…TPQE), 2043–2132 (APQE…LPPE), 2133–2230 (RVDP…TVPE), 2231–2318 (GVPA…APPE), 2319–2421 (GTVN…MPPG), 2425–2519 (GLLS…TTED), 2520–2613 (KPGP…TPEG), 2614–2709 (IPGP…TRPS), 2713–2806 (GVQP…THPA), 2807–2910 (LPQE…TLAG), 2914–3005 (RGAT…TWEE), 3009–3099 (GMRP…TPSG), 3380–3485 (ATEE…TRED), 3486–3577 (VPQG…TRGV), 3580–3670 (SVPP…AAPQ), 3672–3762 (VWVT…TPED), 3765–3852 (PPCN…TLEA), 3853–3950 (APVG…TLEA), 3951–4054 (PPQD…SAPS), 4055–4143 (GLMN…APPD), 4144–4251 (SQMA…APPD), 4252–4344 (GLSP…ASPA), 4345–4432 (GVSP…APPE), 4433–4517 (DMDP…TSPS), 4518–4620 (APSG…IPPL), 4625–4720 (PHLE…TGPA), 4721–4813 (PPEG…THPA), and 4814–4916 (PPSG…TKKE). Residues 1930-1950 (SDWSRGRTLGSAPHSVPTPSR) form a disordered region.

As to quaternary structure, interacts with collagen IV and fibronectin via its laminin EGF-like domains. Interaction with collagen may be required for stable integration into the basement membrane. Interacts with NINL. Interacts with USH1C. Interacts (via the cytoplasmic region) with PDZD7. Component of USH2 complex, composed of ADGRV1, PDZD7, USH2A and WHRN. Interacts with ADGRV1/MASS1 (via N-terminal PDZ domain). Interacts (via the cytoplasmic region) with WHRN. Interacts (via the cytoplasmic region) with VEZT and MYO7A (via MyTH4-FERM domains); the interaction associates VEZT with the USH2 complex at the stereocilia base. Present in the synaptic terminals of inner ear hair cells (at protein level). Predominantly expressed in the retina and cochlea. Weakly expressed in brain and kidney. Detectable from E17 in the neural epithelium, but not in the retinal pigment epithelium (RPE) of the developing retina. After birth, it is expressed at P7 and remains expressed during adulthood.

It localises to the secreted. Its subcellular location is the cell projection. It is found in the stereocilium membrane. The protein resides in the photoreceptor inner segment. Functionally, involved in hearing and vision as member of the USH2 complex. In the inner ear, required for the hair bundle ankle formation, which connects growing stereocilia in developing cochlear hair cells. In retina photoreceptors, the USH2 complex is required for the maintenance of periciliary membrane complex that seems to play a role in regulating intracellular protein transport. The protein is Usherin (Ush2a) of Rattus norvegicus (Rat).